Consider the following 372-residue polypeptide: Chaperone protein DnaJ (372 aa).

The 66-residue stretch at 5 to 70 folds into the J domain; it reads SYYDILGVSK…KKRQAYDQFG (66 aa). Residues 140 to 218 form a CR-type zinc finger; that stretch reads GREYKIEIPR…CGGQGLQEKR (79 aa). 8 residues coordinate Zn(2+): Cys153, Cys156, Cys170, Cys173, Cys192, Cys195, Cys206, and Cys209. 4 CXXCXGXG motif repeats span residues 153–160, 170–177, 192–199, and 206–213; these read CVDCNGSG, CPDCGGSG, CPTCRGKG, and CRSCGGQG.

It belongs to the DnaJ family. As to quaternary structure, homodimer. It depends on Zn(2+) as a cofactor.

It localises to the cytoplasm. Its function is as follows. Participates actively in the response to hyperosmotic and heat shock by preventing the aggregation of stress-denatured proteins and by disaggregating proteins, also in an autonomous, DnaK-independent fashion. Unfolded proteins bind initially to DnaJ; upon interaction with the DnaJ-bound protein, DnaK hydrolyzes its bound ATP, resulting in the formation of a stable complex. GrpE releases ADP from DnaK; ATP binding to DnaK triggers the release of the substrate protein, thus completing the reaction cycle. Several rounds of ATP-dependent interactions between DnaJ, DnaK and GrpE are required for fully efficient folding. Also involved, together with DnaK and GrpE, in the DNA replication of plasmids through activation of initiation proteins. The polypeptide is Chaperone protein DnaJ (Leptospira interrogans serogroup Icterohaemorrhagiae serovar copenhageni (strain Fiocruz L1-130)).